We begin with the raw amino-acid sequence, 115 residues long: NADH-ubiquinone oxidoreductase chain 3 (115 aa).

The next 3 helical transmembrane spans lie at 4-24 (LMVLTVNMMLSTCLILIAFWL), 55-75 (FFLVAITFLLFDLEIALLLPL), and 84-104 (INIMTLTSFILVSVLALGLAY).

Belongs to the complex I subunit 3 family. As to quaternary structure, core subunit of respiratory chain NADH dehydrogenase (Complex I) which is composed of 45 different subunits. Interacts with TMEM186. Interacts with TMEM242.

The protein localises to the mitochondrion membrane. The catalysed reaction is a ubiquinone + NADH + 5 H(+)(in) = a ubiquinol + NAD(+) + 4 H(+)(out). Functionally, core subunit of the mitochondrial membrane respiratory chain NADH dehydrogenase (Complex I) that is believed to belong to the minimal assembly required for catalysis. Complex I functions in the transfer of electrons from NADH to the respiratory chain. The immediate electron acceptor for the enzyme is believed to be ubiquinone. The chain is NADH-ubiquinone oxidoreductase chain 3 from Onychomys leucogaster (Northern grasshopper mouse).